Reading from the N-terminus, the 369-residue chain is Peptide chain release factor 2 (369 aa).

Residue Gln251 is modified to N5-methylglutamine.

Belongs to the prokaryotic/mitochondrial release factor family. Post-translationally, methylated by PrmC. Methylation increases the termination efficiency of RF2.

The protein localises to the cytoplasm. Functionally, peptide chain release factor 2 directs the termination of translation in response to the peptide chain termination codons UGA and UAA. The polypeptide is Peptide chain release factor 2 (prfB) (Chlamydia muridarum (strain MoPn / Nigg)).